Reading from the N-terminus, the 116-residue chain is U16-barytoxin-Tl1c (116 aa).

The N-terminal stretch at methionine 1 to alanine 20 is a signal peptide. Positions asparagine 21–arginine 74 are excised as a propeptide. Intrachain disulfides connect cysteine 75-cysteine 90, cysteine 82-cysteine 95, and cysteine 89-cysteine 110.

This sequence belongs to the neurotoxin 14 (magi-1) family. 06 (ICK-Trit) subfamily. In terms of tissue distribution, expressed by the venom gland.

It localises to the secreted. In terms of biological role, ion channel inhibitor. The polypeptide is U16-barytoxin-Tl1c (Trittame loki (Brush-footed trapdoor spider)).